Here is a 567-residue protein sequence, read N- to C-terminus: 2-succinyl-5-enolpyruvyl-6-hydroxy-3-cyclohexene-1-carboxylate synthase (567 aa).

This sequence belongs to the TPP enzyme family. MenD subfamily. Homodimer. Requires Mg(2+) as cofactor. It depends on Mn(2+) as a cofactor. Thiamine diphosphate is required as a cofactor.

It carries out the reaction isochorismate + 2-oxoglutarate + H(+) = 5-enolpyruvoyl-6-hydroxy-2-succinyl-cyclohex-3-ene-1-carboxylate + CO2. Its pathway is quinol/quinone metabolism; 1,4-dihydroxy-2-naphthoate biosynthesis; 1,4-dihydroxy-2-naphthoate from chorismate: step 2/7. The protein operates within quinol/quinone metabolism; menaquinone biosynthesis. Catalyzes the thiamine diphosphate-dependent decarboxylation of 2-oxoglutarate and the subsequent addition of the resulting succinic semialdehyde-thiamine pyrophosphate anion to isochorismate to yield 2-succinyl-5-enolpyruvyl-6-hydroxy-3-cyclohexene-1-carboxylate (SEPHCHC). In Yersinia pestis bv. Antiqua (strain Antiqua), this protein is 2-succinyl-5-enolpyruvyl-6-hydroxy-3-cyclohexene-1-carboxylate synthase.